The following is a 193-amino-acid chain: Hydroxyacylglutathione hydrolase-like protein (193 aa).

The Zn(2+) site is built by His54, His56, Asp58, His59, and His110.

This sequence belongs to the metallo-beta-lactamase superfamily. Glyoxalase II family. Requires Zn(2+) as cofactor.

In terms of biological role, hydrolase acting on ester bonds. The polypeptide is Hydroxyacylglutathione hydrolase-like protein (HAGHL) (Bos taurus (Bovine)).